The sequence spans 1339 residues: Astrotactin-2 (1339 aa).

A signal peptide spans 1–49 (MAAAGARLSPGPGSGLRGRPRLCFHPGPPPLLPLLLLFLLLLPPPPLLA). Topologically, residues 50-206 (GATAAASREP…IVEEQMHILH (157 aa)) are lumenal. The N-linked (GlcNAc...) asparagine glycan is linked to asparagine 168. A helical transmembrane segment spans residues 207–227 (ISVMGGLIALLLLLLVFTVAL). At 228–434 (YAQRRWQKRR…KGLLKSPVNK (207 aa)) the chain is on the cytoplasmic side. Disordered regions lie at residues 296–316 (EEDEEPPRRANHVSREDEFGS) and 363–408 (TPIE…ADDE). A helical membrane pass occupies residues 435–455 (TALTLIAVSSCILAMVCGSQM). Residues 456–1339 (SCPLTVKVTL…RNTYGESKGR (884 aa)) lie on the Lumenal side of the membrane. EGF-like domains are found at residues 510-550 (VRDL…HLCV), 651-695 (PVRD…SGCY), and 699-751 (KGID…KSCL). 9 cysteine pairs are disulfide-bonded: cysteine 514–cysteine 526, cysteine 522–cysteine 533, cysteine 535–cysteine 549, cysteine 655–cysteine 668, cysteine 662–cysteine 679, cysteine 681–cysteine 694, cysteine 703–cysteine 715, cysteine 711–cysteine 735, and cysteine 737–cysteine 750. 2 N-linked (GlcNAc...) asparagine glycosylation sites follow: asparagine 770 and asparagine 783. 3 disulfides stabilise this stretch: cysteine 825/cysteine 987, cysteine 916/cysteine 977, and cysteine 983/cysteine 990. A glycan (N-linked (GlcNAc...) asparagine) is linked at asparagine 1020. 5 cysteine pairs are disulfide-bonded: cysteine 1036–cysteine 1047, cysteine 1049–cysteine 1062, cysteine 1136–cysteine 1158, cysteine 1190–cysteine 1277, and cysteine 1298–cysteine 1321. Positions 1065 to 1188 (LLQPVLRLSP…SELSTVTLRT (124 aa)) constitute a Fibronectin type-III domain.

The protein belongs to the astrotactin family. Interacts with ASTN1; the interaction is not calcium-dependent.

It is found in the membrane. The protein resides in the perikaryon. Its subcellular location is the cytoplasm. The protein localises to the cell cortex. It localises to the early endosome. It is found in the late endosome. The protein resides in the cytoplasmic vesicle. Its subcellular location is the clathrin-coated vesicle. Mediates recycling of the neuronal cell adhesion molecule ASTN1 to the anterior pole of the cell membrane in migrating neurons. Promotes ASTN1 internalization and intracellular transport of endocytosed ASTN1. Selectively binds inositol-4,5-bisphosphate, inositol-3,4,5-trisphosphate and inositol-1,3,4,5-tetrakisphosphate, suggesting it is recruited to membranes that contain lipids with a phosphoinositide headgroup. This chain is Astrotactin-2 (ASTN2), found in Homo sapiens (Human).